The chain runs to 313 residues: Olfactory receptor 5D18 (313 aa).

Topologically, residues Met-1–Val-26 are extracellular. The N-linked (GlcNAc...) asparagine glycan is linked to Asn-7. The chain crosses the membrane as a helical span at residues Pro-27–Ile-47. Residues Val-48 to Lys-55 lie on the Cytoplasmic side of the membrane. The chain crosses the membrane as a helical span at residues Leu-56 to Ser-76. Residues Ile-77–Val-100 are Extracellular-facing. Cys-98 and Cys-190 are joined by a disulfide. Residues Gln-101 to Tyr-121 traverse the membrane as a helical segment. Residues Asp-122–Lys-140 are Cytoplasmic-facing. The helical transmembrane segment at Leu-141–Thr-161 threads the bilayer. The Extracellular segment spans residues Cys-162 to Gln-197. The helical transmembrane segment at Trp-198 to Ser-218 threads the bilayer. The Cytoplasmic portion of the chain corresponds to Tyr-219 to Ala-238. A helical membrane pass occupies residues Phe-239 to Leu-259. The Extracellular portion of the chain corresponds to Tyr-260 to Val-272. The chain crosses the membrane as a helical span at residues Lys-273–Leu-293. Residues Arg-294–Tyr-313 are Cytoplasmic-facing.

The protein belongs to the G-protein coupled receptor 1 family.

It is found in the cell membrane. In terms of biological role, odorant receptor. In Homo sapiens (Human), this protein is Olfactory receptor 5D18 (OR5D18).